The primary structure comprises 572 residues: Receptor-transporting protein 5 (572 aa).

A 3CxxC-type zinc finger spans residues Ser52 to Glu148. A helical membrane pass occupies residues Phe544–Met560.

It localises to the membrane. The sequence is that of Receptor-transporting protein 5 (RTP5) from Homo sapiens (Human).